A 628-amino-acid polypeptide reads, in one-letter code: Carbon monoxide dehydrogenase 1 (628 aa).

Positions 44, 52, 53, 56, 61, and 75 each coordinate [4Fe-4S] cluster. [Ni-4Fe-5S] cluster-binding residues include H266, C302, C340, C448, C478, and C519.

Belongs to the Ni-containing carbon monoxide dehydrogenase family. Homodimer. Requires [4Fe-4S] cluster as cofactor. [Ni-4Fe-5S] cluster serves as cofactor.

The catalysed reaction is CO + 2 oxidized [2Fe-2S]-[ferredoxin] + H2O = 2 reduced [2Fe-2S]-[ferredoxin] + CO2 + 2 H(+). Its function is as follows. CODH oxidizes carbon monoxide coupled, via CooF, to the reduction of a hydrogen cation by a hydrogenase (possibly CooH). The chain is Carbon monoxide dehydrogenase 1 (cooS1) from Methanosarcina acetivorans (strain ATCC 35395 / DSM 2834 / JCM 12185 / C2A).